Reading from the N-terminus, the 422-residue chain is Serine hydroxymethyltransferase (422 aa).

(6S)-5,6,7,8-tetrahydrofolate is bound at residue 120–122 (GHI). The residue at position 226 (K226) is an N6-(pyridoxal phosphate)lysine. E241 is a (6S)-5,6,7,8-tetrahydrofolate binding site.

Belongs to the SHMT family. Homodimer. It depends on pyridoxal 5'-phosphate as a cofactor.

It is found in the cytoplasm. The catalysed reaction is 5,10-methylenetetrahydromethanopterin + glycine + H2O = 5,6,7,8-tetrahydromethanopterin + L-serine. It participates in amino-acid biosynthesis; glycine biosynthesis; glycine from L-serine: step 1/1. Catalyzes the reversible interconversion of serine and glycine with tetrahydromethanopterin (H4MPT) serving as the one-carbon carrier. Also exhibits a pteridine-independent aldolase activity toward beta-hydroxyamino acids, producing glycine and aldehydes, via a retro-aldol mechanism. The protein is Serine hydroxymethyltransferase of Methanosphaera stadtmanae (strain ATCC 43021 / DSM 3091 / JCM 11832 / MCB-3).